We begin with the raw amino-acid sequence, 84 residues long: Small ribosomal subunit protein uS17 (84 aa).

This sequence belongs to the universal ribosomal protein uS17 family. As to quaternary structure, part of the 30S ribosomal subunit.

In terms of biological role, one of the primary rRNA binding proteins, it binds specifically to the 5'-end of 16S ribosomal RNA. This Borrelia duttonii (strain Ly) protein is Small ribosomal subunit protein uS17.